The following is a 368-amino-acid chain: Phosphoserine aminotransferase (368 aa).

R44 provides a ligand contact to L-glutamate. Residues 78 to 79 (AT), W104, T157, D179, and Q202 contribute to the pyridoxal 5'-phosphate site. N6-(pyridoxal phosphate)lysine is present on K203. Pyridoxal 5'-phosphate is bound at residue 244 to 245 (NT).

It belongs to the class-V pyridoxal-phosphate-dependent aminotransferase family. SerC subfamily. As to quaternary structure, homodimer. Pyridoxal 5'-phosphate serves as cofactor.

The protein localises to the cytoplasm. It catalyses the reaction O-phospho-L-serine + 2-oxoglutarate = 3-phosphooxypyruvate + L-glutamate. The enzyme catalyses 4-(phosphooxy)-L-threonine + 2-oxoglutarate = (R)-3-hydroxy-2-oxo-4-phosphooxybutanoate + L-glutamate. It functions in the pathway amino-acid biosynthesis; L-serine biosynthesis; L-serine from 3-phospho-D-glycerate: step 2/3. Its pathway is cofactor biosynthesis; pyridoxine 5'-phosphate biosynthesis; pyridoxine 5'-phosphate from D-erythrose 4-phosphate: step 3/5. In terms of biological role, catalyzes the reversible conversion of 3-phosphohydroxypyruvate to phosphoserine and of 3-hydroxy-2-oxo-4-phosphonooxybutanoate to phosphohydroxythreonine. This Neisseria meningitidis serogroup A / serotype 4A (strain DSM 15465 / Z2491) protein is Phosphoserine aminotransferase.